The chain runs to 557 residues: Formate--tetrahydrofolate ligase 2 (557 aa).

66–73 (TPAGEGKT) serves as a coordination point for ATP.

Belongs to the formate--tetrahydrofolate ligase family.

The enzyme catalyses (6S)-5,6,7,8-tetrahydrofolate + formate + ATP = (6R)-10-formyltetrahydrofolate + ADP + phosphate. Its pathway is one-carbon metabolism; tetrahydrofolate interconversion. The protein is Formate--tetrahydrofolate ligase 2 of Streptococcus pyogenes serotype M12 (strain MGAS9429).